We begin with the raw amino-acid sequence, 620 residues long: 1-deoxy-D-xylulose-5-phosphate synthase (620 aa).

Residues histidine 80 and 121–123 (GHS) contribute to the thiamine diphosphate site. Aspartate 152 is a binding site for Mg(2+). Thiamine diphosphate contacts are provided by residues 153–154 (GA), asparagine 181, tyrosine 288, and glutamate 370. Asparagine 181 contributes to the Mg(2+) binding site.

This sequence belongs to the transketolase family. DXPS subfamily. Homodimer. The cofactor is Mg(2+). It depends on thiamine diphosphate as a cofactor.

The enzyme catalyses D-glyceraldehyde 3-phosphate + pyruvate + H(+) = 1-deoxy-D-xylulose 5-phosphate + CO2. It functions in the pathway metabolic intermediate biosynthesis; 1-deoxy-D-xylulose 5-phosphate biosynthesis; 1-deoxy-D-xylulose 5-phosphate from D-glyceraldehyde 3-phosphate and pyruvate: step 1/1. Its function is as follows. Catalyzes the acyloin condensation reaction between C atoms 2 and 3 of pyruvate and glyceraldehyde 3-phosphate to yield 1-deoxy-D-xylulose-5-phosphate (DXP). In Salmonella choleraesuis (strain SC-B67), this protein is 1-deoxy-D-xylulose-5-phosphate synthase.